A 357-amino-acid polypeptide reads, in one-letter code: Cell division control protein 10 (357 aa).

The Septin-type G domain occupies 34–306 (RGFQFNIMVV…ETFRSKQLIA (273 aa)). The interval 44–51 (GRSGLGKS) is G1 motif. GTP-binding positions include 44–51 (GRSGLGKS), Thr-78, Gly-104, 184–192 (KSDSLTLDE), Gly-240, and Arg-255. The tract at residues 101-104 (DTPG) is G3 motif. The interval 183–186 (AKSD) is G4 motif. The disordered stretch occupies residues 310-357 (NASNPNRQSQLQKDQGQTSQQSNQDLKNTSGVPNAPMFQSTTGTAAAR).

This sequence belongs to the TRAFAC class TrmE-Era-EngA-EngB-Septin-like GTPase superfamily. Septin GTPase family.

Its subcellular location is the bud neck. Functionally, plays a role in the cell cycle. Involved in the formation of the ring of filaments in the neck region at the mother-bud junction during mitosis. The chain is Cell division control protein 10 (CDC10) from Candida albicans (strain SC5314 / ATCC MYA-2876) (Yeast).